The primary structure comprises 200 residues: Cytochrome c biogenesis ATP-binding export protein CcmA (200 aa).

The 200-residue stretch at 1-200 folds into the ABC transporter domain; that stretch reads MRLSGNGLRC…ARELRIGGAA (200 aa). An ATP-binding site is contributed by 35–42; that stretch reads GPNGAGKT.

The protein belongs to the ABC transporter superfamily. CcmA exporter (TC 3.A.1.107) family. In terms of assembly, the complex is composed of two ATP-binding proteins (CcmA) and two transmembrane proteins (CcmB).

The protein resides in the cell inner membrane. The catalysed reaction is heme b(in) + ATP + H2O = heme b(out) + ADP + phosphate + H(+). In terms of biological role, part of the ABC transporter complex CcmAB involved in the biogenesis of c-type cytochromes; once thought to export heme, this seems not to be the case, but its exact role is uncertain. Responsible for energy coupling to the transport system. The polypeptide is Cytochrome c biogenesis ATP-binding export protein CcmA (Nitrobacter winogradskyi (strain ATCC 25391 / DSM 10237 / CIP 104748 / NCIMB 11846 / Nb-255)).